A 219-amino-acid polypeptide reads, in one-letter code: Thiamine-phosphate synthase (219 aa).

4-amino-2-methyl-5-(diphosphooxymethyl)pyrimidine contacts are provided by residues 44-48 (QLREK) and Asn-79. Asp-80 and Asp-99 together coordinate Mg(2+). Ser-117 lines the 4-amino-2-methyl-5-(diphosphooxymethyl)pyrimidine pocket. Residue 143–145 (TST) participates in 2-[(2R,5Z)-2-carboxy-4-methylthiazol-5(2H)-ylidene]ethyl phosphate binding. Lys-146 contacts 4-amino-2-methyl-5-(diphosphooxymethyl)pyrimidine. 2-[(2R,5Z)-2-carboxy-4-methylthiazol-5(2H)-ylidene]ethyl phosphate contacts are provided by residues Gly-175 and 195-196 (IS).

The protein belongs to the thiamine-phosphate synthase family. Mg(2+) serves as cofactor.

It carries out the reaction 2-[(2R,5Z)-2-carboxy-4-methylthiazol-5(2H)-ylidene]ethyl phosphate + 4-amino-2-methyl-5-(diphosphooxymethyl)pyrimidine + 2 H(+) = thiamine phosphate + CO2 + diphosphate. The catalysed reaction is 2-(2-carboxy-4-methylthiazol-5-yl)ethyl phosphate + 4-amino-2-methyl-5-(diphosphooxymethyl)pyrimidine + 2 H(+) = thiamine phosphate + CO2 + diphosphate. It catalyses the reaction 4-methyl-5-(2-phosphooxyethyl)-thiazole + 4-amino-2-methyl-5-(diphosphooxymethyl)pyrimidine + H(+) = thiamine phosphate + diphosphate. Its pathway is cofactor biosynthesis; thiamine diphosphate biosynthesis; thiamine phosphate from 4-amino-2-methyl-5-diphosphomethylpyrimidine and 4-methyl-5-(2-phosphoethyl)-thiazole: step 1/1. Its function is as follows. Condenses 4-methyl-5-(beta-hydroxyethyl)thiazole monophosphate (THZ-P) and 2-methyl-4-amino-5-hydroxymethyl pyrimidine pyrophosphate (HMP-PP) to form thiamine monophosphate (TMP). In Bacillus mycoides (strain KBAB4) (Bacillus weihenstephanensis), this protein is Thiamine-phosphate synthase.